Here is a 466-residue protein sequence, read N- to C-terminus: UDP-N-acetylmuramate--L-alanine ligase (466 aa).

119 to 125 (GTHGKTT) lines the ATP pocket.

Belongs to the MurCDEF family.

It is found in the cytoplasm. It catalyses the reaction UDP-N-acetyl-alpha-D-muramate + L-alanine + ATP = UDP-N-acetyl-alpha-D-muramoyl-L-alanine + ADP + phosphate + H(+). It functions in the pathway cell wall biogenesis; peptidoglycan biosynthesis. Cell wall formation. The chain is UDP-N-acetylmuramate--L-alanine ligase from Cytophaga hutchinsonii (strain ATCC 33406 / DSM 1761 / CIP 103989 / NBRC 15051 / NCIMB 9469 / D465).